The following is a 467-amino-acid chain: Ribosomal protein uS12 methylthiotransferase RimO (467 aa).

Residues 1–110 (MDLHGCAKNQ…LPQLIDSMFP (110 aa)) form the MTTase N-terminal domain. Residues C6, C42, C73, C153, C157, and C160 each coordinate [4Fe-4S] cluster. One can recognise a Radical SAM core domain in the interval 139–386 (LNFPRSTYIK…QNAQTSITEK (248 aa)). In terms of domain architecture, TRAM spans 389–467 (DSFIGKEIEV…NGFDLEAVAV (79 aa)).

Belongs to the methylthiotransferase family. RimO subfamily. It depends on [4Fe-4S] cluster as a cofactor.

The protein resides in the cytoplasm. It catalyses the reaction L-aspartate(89)-[ribosomal protein uS12]-hydrogen + (sulfur carrier)-SH + AH2 + 2 S-adenosyl-L-methionine = 3-methylsulfanyl-L-aspartate(89)-[ribosomal protein uS12]-hydrogen + (sulfur carrier)-H + 5'-deoxyadenosine + L-methionine + A + S-adenosyl-L-homocysteine + 2 H(+). In terms of biological role, catalyzes the methylthiolation of an aspartic acid residue of ribosomal protein uS12. The sequence is that of Ribosomal protein uS12 methylthiotransferase RimO from Treponema denticola (strain ATCC 35405 / DSM 14222 / CIP 103919 / JCM 8153 / KCTC 15104).